The sequence spans 131 residues: Profilin-4 (131 aa).

Belongs to the profilin family. In terms of assembly, occurs in many kinds of cells as a complex with monomeric actin in a 1:1 ratio.

It is found in the cytoplasm. The protein localises to the cytoskeleton. Functionally, binds to actin and affects the structure of the cytoskeleton. At high concentrations, profilin prevents the polymerization of actin, whereas it enhances it at low concentrations. By binding to PIP2, it inhibits the formation of IP3 and DG. This Hevea brasiliensis (Para rubber tree) protein is Profilin-4.